Reading from the N-terminus, the 278-residue chain is 1-acyl-sn-glycerol-3-phosphate acyltransferase beta (278 aa).

The N-terminal stretch at 1-23 (MELWPCLAAALLLLLLLVQLSRA) is a signal peptide. Over 24–29 (AEFYAK) the chain is Lumenal. Residues 30–50 (VALYCALCFTVSAVASLVCLL) traverse the membrane as a helical segment. Over 51 to 121 (RHGGRTVENM…PERCVQIAKR (71 aa)) the chain is Cytoplasmic. Positions 98-103 (HQSILD) match the HXXXXD motif motif. The chain crosses the membrane as a helical span at residues 122-142 (ELLFLGPVGLIMYLGGVFFIN). Topologically, residues 143–278 (RQRSSTAMTV…TAGSGVQPAQ (136 aa)) are lumenal. The EGTR motif motif lies at 172–175 (EGTR).

It belongs to the 1-acyl-sn-glycerol-3-phosphate acyltransferase family. As to expression, expressed predominantly in adipose tissue, pancreas and liver.

The protein resides in the endoplasmic reticulum membrane. It catalyses the reaction a 1-acyl-sn-glycero-3-phosphate + an acyl-CoA = a 1,2-diacyl-sn-glycero-3-phosphate + CoA. It carries out the reaction 1-(9Z-octadecenoyl)-sn-glycero-3-phosphate + (9Z)-octadecenoyl-CoA = 1,2-di-(9Z-octadecenoyl)-sn-glycero-3-phosphate + CoA. The catalysed reaction is 1-(9Z-octadecenoyl)-sn-glycero-3-phosphate + hexadecanoyl-CoA = 1-(9Z)-octadecenoyl-2-hexadecanoyl-sn-glycero-3-phosphate + CoA. The enzyme catalyses heptadecanoyl-CoA + 1-(9Z-octadecenoyl)-sn-glycero-3-phosphate = 1-(9Z)-octadecenoyl-2-heptadecanoyl-sn-glycero-3-phosphate + CoA. It catalyses the reaction 1-(9Z-octadecenoyl)-sn-glycero-3-phosphate + (9Z,12Z)-octadecadienoyl-CoA = 1-(9Z)-octadecenoyl-2-(9Z,12Z)-octadecadienoyl-sn-glycero-3-phosphate + CoA. It carries out the reaction 1-(9Z-octadecenoyl)-sn-glycero-3-phosphate + tetradecanoyl-CoA = 1-(9Z)-octadecenoyl-2-tetradecanoyl-sn-glycero-3-phosphate + CoA. The catalysed reaction is pentadecanoyl-CoA + 1-(9Z-octadecenoyl)-sn-glycero-3-phosphate = 1-(9Z)-octadecenoyl-2-pentadecanoyl-sn-glycero-3-phosphate + CoA. The enzyme catalyses 1-hexadecanoyl-sn-glycero-3-phosphate + (9Z)-octadecenoyl-CoA = 1-hexadecanoyl-2-(9Z-octadecenoyl)-sn-glycero-3-phosphate + CoA. It catalyses the reaction 1-tetradecanoyl-sn-glycerol 3-phosphate + (9Z)-octadecenoyl-CoA = 1-tetradecanoyl-2-(9Z)-octadecenoyl-sn-glycero-3-phosphate + CoA. It carries out the reaction 1-(9Z,12Z,15Z)-octadecatrienoyl-sn-glycero-3-phosphate + (9Z)-octadecenoyl-CoA = 1-(9Z,12Z,15Z)-octadecatrienoyl-2-(9Z)-octadecenoyl-sn-glycero-3-phosphate + CoA. The catalysed reaction is 1-(6Z,9Z,12Z-octadecatrienoyl)-sn-glycero-3-phosphate + (9Z)-octadecenoyl-CoA = (6Z,9Z,12Z)-octadecatrienoyl-2-(9Z)-octadecenoyl-sn-glycero-3-phosphate + CoA. The enzyme catalyses 1-eicosanoyl-sn-glycero-3-phosphate + (9Z)-octadecenoyl-CoA = 1-eicosanoyl-2-(9Z)-octadecenoyl-sn-glycero-3-phosphate + CoA. It catalyses the reaction 1-hexadecanoyl-sn-glycero-3-phosphate + octadecanoyl-CoA = 1-hexadecanoyl-2-octadecanoyl-sn-glycero-3-phosphate + CoA. It carries out the reaction 1-hexadecanoyl-sn-glycero-3-phosphate + (5Z,8Z,11Z,14Z)-eicosatetraenoyl-CoA = 1-hexadecanoyl-2-(5Z,8Z,11Z,14Z-eicosatetraenoyl)-sn-glycero-3-phosphate + CoA. The catalysed reaction is 1-hexadecanoyl-sn-glycero-3-phosphate + hexadecanoyl-CoA = 1,2-dihexadecanoyl-sn-glycero-3-phosphate + CoA. The enzyme catalyses 1-hexadecanoyl-sn-glycero-3-phosphate + tetradecanoyl-CoA = 1-hexadecanoyl-2-tetradecanoyl-sn-glycero-3-phosphate + CoA. It catalyses the reaction (11Z)-octadecenoyl-CoA + 1-(9Z-octadecenoyl)-sn-glycero-3-phosphate = 1-(9Z)-octadecenoyl-2-(11Z)-octadecenoyl-sn-glycero-3-phosphate + CoA. It functions in the pathway phospholipid metabolism; CDP-diacylglycerol biosynthesis; CDP-diacylglycerol from sn-glycerol 3-phosphate: step 2/3. Converts 1-acyl-sn-glycerol-3-phosphate (lysophosphatidic acid or LPA) into 1,2-diacyl-sn-glycerol-3-phosphate (phosphatidic acid or PA) by incorporating an acyl moiety at the sn-2 position of the glycerol backbone. This is 1-acyl-sn-glycerol-3-phosphate acyltransferase beta (AGPAT2) from Homo sapiens (Human).